Here is a 146-residue protein sequence, read N- to C-terminus: Large ribosomal subunit protein uL24z (146 aa).

Disordered regions lie at residues 1 to 26 (MKYNPRVTSSRRKNRKAHFTASSSER) and 121 to 146 (KAKGRAAADKEKGTKFTSEDVMQNVD). The span at 9-18 (SSRRKNRKAH) shows a compositional bias: basic residues. Basic and acidic residues predominate over residues 121–138 (KAKGRAAADKEKGTKFTS).

It belongs to the universal ribosomal protein uL24 family.

This Arabidopsis thaliana (Mouse-ear cress) protein is Large ribosomal subunit protein uL24z (RPL26A).